The chain runs to 264 residues: Thymidylate synthase (264 aa).

Arginine 21 contributes to the dUMP binding site. Histidine 51 contacts (6R)-5,10-methylene-5,6,7,8-tetrahydrofolate. Residue 126-127 (RR) coordinates dUMP. The active-site Nucleophile is the cysteine 146. Residues 166–169 (RSGD), asparagine 177, and 207–209 (HLY) contribute to the dUMP site. (6R)-5,10-methylene-5,6,7,8-tetrahydrofolate is bound at residue aspartate 169. Alanine 263 contributes to the (6R)-5,10-methylene-5,6,7,8-tetrahydrofolate binding site.

It belongs to the thymidylate synthase family. Bacterial-type ThyA subfamily. As to quaternary structure, homodimer.

The protein localises to the cytoplasm. It catalyses the reaction dUMP + (6R)-5,10-methylene-5,6,7,8-tetrahydrofolate = 7,8-dihydrofolate + dTMP. Its pathway is pyrimidine metabolism; dTTP biosynthesis. Functionally, catalyzes the reductive methylation of 2'-deoxyuridine-5'-monophosphate (dUMP) to 2'-deoxythymidine-5'-monophosphate (dTMP) while utilizing 5,10-methylenetetrahydrofolate (mTHF) as the methyl donor and reductant in the reaction, yielding dihydrofolate (DHF) as a by-product. This enzymatic reaction provides an intracellular de novo source of dTMP, an essential precursor for DNA biosynthesis. The chain is Thymidylate synthase from Xanthomonas oryzae pv. oryzae (strain MAFF 311018).